The primary structure comprises 254 residues: Ribosomal RNA small subunit methyltransferase J (254 aa).

S-adenosyl-L-methionine contacts are provided by residues 101-102 (RD), 117-118 (ER), 153-154 (SS), and Asp-171.

It belongs to the methyltransferase superfamily. RsmJ family.

Its subcellular location is the cytoplasm. The catalysed reaction is guanosine(1516) in 16S rRNA + S-adenosyl-L-methionine = N(2)-methylguanosine(1516) in 16S rRNA + S-adenosyl-L-homocysteine + H(+). Its function is as follows. Specifically methylates the guanosine in position 1516 of 16S rRNA. The chain is Ribosomal RNA small subunit methyltransferase J from Enterobacter sp. (strain 638).